A 391-amino-acid polypeptide reads, in one-letter code: Somatostatin receptor type 1 (391 aa).

The interval 1–50 is disordered; that stretch reads MFPNGTAPSPTSSPSSSPGGCGEGVCSRGPGSGAADGMEEPGRNSSQNGT. Topologically, residues 1–56 are extracellular; it reads MFPNGTAPSPTSSPSSSPGGCGEGVCSRGPGSGAADGMEEPGRNSSQNGTLSEGQG. An N-linked (GlcNAc...) asparagine glycan is attached at asparagine 4. Over residues 8–18 the composition is skewed to low complexity; it reads PSPTSSPSSSP. 2 N-linked (GlcNAc...) asparagine glycosylation sites follow: asparagine 44 and asparagine 48. Residues 57-84 form a helical membrane-spanning segment; it reads SAILISFIYSVVCLVGLCGNSMVIYVIL. Over 85 to 94 the chain is Cytoplasmic; that stretch reads RYAKMKTATN. Residues 95 to 120 form a helical membrane-spanning segment; it reads IYILNLAIADELLMLSVPFLVTSTLL. At 121–131 the chain is on the extracellular side; that stretch reads RHWPFGALLCR. Cysteine 130 and cysteine 208 form a disulfide bridge. A helical transmembrane segment spans residues 132–153; sequence LVLSVDAVNMFTSIYCLTVLSV. Topologically, residues 154 to 175 are cytoplasmic; the sequence is DRYVAVVHPIKAARYRRPTVAK. The chain crosses the membrane as a helical span at residues 176–196; it reads VVNLGVWVLSLLVILPIVVFS. Over 197–219 the chain is Extracellular; that stretch reads RTAANSDGTVACNMLMPEPAQRW. Residues 220–244 form a helical membrane-spanning segment; that stretch reads LVGFVLYTFLMGFLLPVGAICLCYV. At 245 to 270 the chain is on the cytoplasmic side; the sequence is LIIAKMRMVALKAGWQQRKRSERKIT. The helical transmembrane segment at 271–296 threads the bilayer; that stretch reads LMVMMVVMVFVICWMPFYVVQLVNVF. Residues 297–303 are Extracellular-facing; the sequence is AEQDDAT. Residues 304-327 traverse the membrane as a helical segment; sequence VSQLSVILGYANSCANPILYGFLS. The Cytoplasmic segment spans residues 328-391; that stretch reads DNFKRSFQRI…GTCASRISTL (64 aa). Residue cysteine 339 is the site of S-palmitoyl cysteine attachment.

Belongs to the G-protein coupled receptor 1 family. Brain, pituitary, islet, jejunum, stomach, heart, spleen.

The protein resides in the cell membrane. Functionally, receptor for somatostatin with higher affinity for somatostatin-14 than -28. This receptor is coupled to phosphotyrosine phosphatase and Na(+)/H(+) exchanger via pertussis toxin insensitive G proteins. In Rattus norvegicus (Rat), this protein is Somatostatin receptor type 1 (Sstr1).